Consider the following 90-residue polypeptide: Sec-independent protein translocase protein TatA (90 aa).

Residues 1 to 21 (MGSMSIWHWVIVAVIVMLLFG) traverse the membrane as a helical segment. The interval 44 to 90 (AEDETPPAVQAAPPPAEPVRTIPHATETSPGTAIPASHLPGGERKPV) is disordered.

Belongs to the TatA/E family. The Tat system comprises two distinct complexes: a TatABC complex, containing multiple copies of TatA, TatB and TatC subunits, and a separate TatA complex, containing only TatA subunits. Substrates initially bind to the TatABC complex, which probably triggers association of the separate TatA complex to form the active translocon.

The protein localises to the cell inner membrane. Part of the twin-arginine translocation (Tat) system that transports large folded proteins containing a characteristic twin-arginine motif in their signal peptide across membranes. TatA could form the protein-conducting channel of the Tat system. This Methylobacterium radiotolerans (strain ATCC 27329 / DSM 1819 / JCM 2831 / NBRC 15690 / NCIMB 10815 / 0-1) protein is Sec-independent protein translocase protein TatA.